The following is a 211-amino-acid chain: MANPIQEILEKQVLTVAKAMEDKIDDEIASLEKLDEDDLEVLRERRLKQMKKMAEKKKRWISLGHGEYSEIHSEKDFFSVVKASERVVCHFYRENWPCKVMDKHMSILAKQHIETRFVKIQAEKSPFLAERLKIVVLPTLALIKNTKVDDYVVGFNELGGKDDFSTEDLEERIARAQVIHYDGESSSLKPKSTTQVRRNVRQSARSDSDSE.

A Thioredoxin domain is found at 68-178 (YSEIHSEKDF…LEERIARAQV (111 aa)). Residues 184–203 (ESSSLKPKSTTQVRRNVRQS) show a composition bias toward polar residues. The tract at residues 184 to 211 (ESSSLKPKSTTQVRRNVRQSARSDSDSE) is disordered.

This chain is Thioredoxin domain-containing protein 9 homolog, found in Arabidopsis thaliana (Mouse-ear cress).